Consider the following 455-residue polypeptide: N(5)-hydroxyornithine:cis-anhydromevalonyl coenzyme A-N(5)-transacylase SIDF (455 aa).

Positions 453–455 match the PTS1-type peroxisomal targeting signal motif; it reads PKL.

The protein belongs to the lysine N-acyltransferase mbtK family.

The protein localises to the peroxisome. The protein operates within siderophore biosynthesis. Its function is as follows. Hydroxyornithine transacylase; part of the gene cluster that mediates the biosynthesis of at least 11 siderophores, including beauverichelin A, dimerumic acid (DA), Na-dimethyl coprogen (NADC), eleutherazine B, ferricrocin (FC), fusarinine A, fusarinine C (FsC), metachelin A, mevalonolactone, rhodotorulic acid (RA) and tenellin. This cocktail of siderophores for iron metabolism is essential for virulence, and more specifically for the fungal virulence in penetrating through the host cuticle. Siderophore synthesis is also involved in conidial germination under iron-deficient conditions. For biosynthesis of fusarinine C, the transacylase SIDF transfers anhydromevalonyl to N(5)-hydroxyornithine. The required anhydromevalonyl-CoA moiety is derived from mevalonate by CoA ligation and dehydration catalyzed by SIDI and sidH respectively. This chain is N(5)-hydroxyornithine:cis-anhydromevalonyl coenzyme A-N(5)-transacylase SIDF, found in Beauveria bassiana (strain ARSEF 2860) (White muscardine disease fungus).